A 464-amino-acid chain; its full sequence is uncharacterized protein (464 aa).

Positions 13–71 (MLKVSDIIQIKIDKIVFGGEGLGYYNGFAVFVPMSIPEDELEIEIISIKKTYARGLIKN) constitute a TRAM domain. Residues Gln-295, Tyr-324, Glu-345, and Asp-393 each contribute to the S-adenosyl-L-methionine site. Cys-420 functions as the Nucleophile in the catalytic mechanism.

It belongs to the class I-like SAM-binding methyltransferase superfamily. RNA M5U methyltransferase family.

This is an uncharacterized protein from Fusobacterium nucleatum subsp. nucleatum (strain ATCC 25586 / DSM 15643 / BCRC 10681 / CIP 101130 / JCM 8532 / KCTC 2640 / LMG 13131 / VPI 4355).